Consider the following 236-residue polypeptide: Ribose-5-phosphate isomerase A (236 aa).

Substrate-binding positions include 28–31, 83–86, and 96–99; these read TGST, DGAD, and KGGG. E105 (proton acceptor) is an active-site residue. K123 contacts substrate.

It belongs to the ribose 5-phosphate isomerase family. As to quaternary structure, homodimer.

It carries out the reaction aldehydo-D-ribose 5-phosphate = D-ribulose 5-phosphate. It functions in the pathway carbohydrate degradation; pentose phosphate pathway; D-ribose 5-phosphate from D-ribulose 5-phosphate (non-oxidative stage): step 1/1. Its function is as follows. Catalyzes the reversible conversion of ribose-5-phosphate to ribulose 5-phosphate. The protein is Ribose-5-phosphate isomerase A of Methylorubrum extorquens (strain CM4 / NCIMB 13688) (Methylobacterium extorquens).